We begin with the raw amino-acid sequence, 325 residues long: Tetraacyldisaccharide 4'-kinase (325 aa).

55–62 (TAGGNGKT) provides a ligand contact to ATP.

The protein belongs to the LpxK family.

It carries out the reaction a lipid A disaccharide + ATP = a lipid IVA + ADP + H(+). Its pathway is glycolipid biosynthesis; lipid IV(A) biosynthesis; lipid IV(A) from (3R)-3-hydroxytetradecanoyl-[acyl-carrier-protein] and UDP-N-acetyl-alpha-D-glucosamine: step 6/6. Functionally, transfers the gamma-phosphate of ATP to the 4'-position of a tetraacyldisaccharide 1-phosphate intermediate (termed DS-1-P) to form tetraacyldisaccharide 1,4'-bis-phosphate (lipid IVA). In Salmonella choleraesuis (strain SC-B67), this protein is Tetraacyldisaccharide 4'-kinase.